Here is a 112-residue protein sequence, read N- to C-terminus: Large ribosomal subunit protein uL1 (112 aa).

Belongs to the universal ribosomal protein uL1 family.

The polypeptide is Large ribosomal subunit protein uL1 (rpl-10a) (Caenorhabditis remanei (Caenorhabditis vulgaris)).